The chain runs to 98 residues: Large ribosomal subunit protein uL23 (98 aa).

Belongs to the universal ribosomal protein uL23 family. As to quaternary structure, part of the 50S ribosomal subunit. Contacts protein L29, and trigger factor when it is bound to the ribosome.

Functionally, one of the early assembly proteins it binds 23S rRNA. One of the proteins that surrounds the polypeptide exit tunnel on the outside of the ribosome. Forms the main docking site for trigger factor binding to the ribosome. The polypeptide is Large ribosomal subunit protein uL23 (Dinoroseobacter shibae (strain DSM 16493 / NCIMB 14021 / DFL 12)).